We begin with the raw amino-acid sequence, 179 residues long: Large ribosomal subunit protein uL6 (179 aa).

This sequence belongs to the universal ribosomal protein uL6 family. As to quaternary structure, part of the 50S ribosomal subunit.

In terms of biological role, this protein binds to the 23S rRNA, and is important in its secondary structure. It is located near the subunit interface in the base of the L7/L12 stalk, and near the tRNA binding site of the peptidyltransferase center. The sequence is that of Large ribosomal subunit protein uL6 from Synechococcus sp. (strain WH7803).